The chain runs to 220 residues: RNLLSVAYKNVVGARRASWRIISSIEQKEESRGNEDHVSVIRDYRSRIEKELSDNCDGILKLLDTKLVPAASSGDSKVFYLKMKGDYHRYLAEFKTGAQRKEAAESTLTAYKAAQDIANAELAPTHPIRLGLALNFSVFYYEILNSPDRACNLAKQAFVEAIAELDTLGEDSYKDSTLIMQLLRDNLTLWTSDMQDEAADEITEEAAKQQKAVNNNKIAY.

Belongs to the 14-3-3 family.

The polypeptide is 14-3-3-like protein (Spinacia oleracea (Spinach)).